The sequence spans 210 residues: Outer-membrane lipoprotein carrier protein (210 aa).

Residues 1-23 form the signal peptide; that stretch reads MLMFSRFRYIFFAVALLSGPVCA.

This sequence belongs to the LolA family. As to quaternary structure, monomer.

The protein localises to the periplasm. Functionally, participates in the translocation of lipoproteins from the inner membrane to the outer membrane. Only forms a complex with a lipoprotein if the residue after the N-terminal Cys is not an aspartate (The Asp acts as a targeting signal to indicate that the lipoprotein should stay in the inner membrane). This Xylella fastidiosa (strain Temecula1 / ATCC 700964) protein is Outer-membrane lipoprotein carrier protein.